Here is a 288-residue protein sequence, read N- to C-terminus: tRNA dimethylallyltransferase (288 aa).

17-24 (GPTASGKS) lines the ATP pocket. Position 19 to 24 (19 to 24 (TASGKS)) interacts with substrate.

Belongs to the IPP transferase family. As to quaternary structure, monomer. It depends on Mg(2+) as a cofactor.

The catalysed reaction is adenosine(37) in tRNA + dimethylallyl diphosphate = N(6)-dimethylallyladenosine(37) in tRNA + diphosphate. Its function is as follows. Catalyzes the transfer of a dimethylallyl group onto the adenine at position 37 in tRNAs that read codons beginning with uridine, leading to the formation of N6-(dimethylallyl)adenosine (i(6)A). The polypeptide is tRNA dimethylallyltransferase (Ruegeria sp. (strain TM1040) (Silicibacter sp.)).